A 380-amino-acid polypeptide reads, in one-letter code: Cytochrome b (380 aa).

4 helical membrane passes run Phe34–Met54, Trp78–Ile99, Trp114–Leu134, and Phe179–Thr199. The heme b site is built by His84 and His98. Residues His183 and His197 each coordinate heme b. His202 is a binding site for a ubiquinone. Helical transmembrane passes span Leu227–Ser247, Leu289–His309, Leu321–Ser341, and Phe348–Pro368.

Belongs to the cytochrome b family. As to quaternary structure, the cytochrome bc1 complex contains 11 subunits: 3 respiratory subunits (MT-CYB, CYC1 and UQCRFS1), 2 core proteins (UQCRC1 and UQCRC2) and 6 low-molecular weight proteins (UQCRH/QCR6, UQCRB/QCR7, UQCRQ/QCR8, UQCR10/QCR9, UQCR11/QCR10 and a cleavage product of UQCRFS1). This cytochrome bc1 complex then forms a dimer. Heme b serves as cofactor.

It is found in the mitochondrion inner membrane. Functionally, component of the ubiquinol-cytochrome c reductase complex (complex III or cytochrome b-c1 complex) that is part of the mitochondrial respiratory chain. The b-c1 complex mediates electron transfer from ubiquinol to cytochrome c. Contributes to the generation of a proton gradient across the mitochondrial membrane that is then used for ATP synthesis. This is Cytochrome b (MT-CYB) from Pelagodroma marina (White-faced storm-petrel).